A 205-amino-acid polypeptide reads, in one-letter code: High frequency lysogenization protein HflD homolog (205 aa).

Belongs to the HflD family.

The protein localises to the cytoplasm. It is found in the cell inner membrane. This Haemophilus influenzae (strain 86-028NP) protein is High frequency lysogenization protein HflD homolog.